Here is a 148-residue protein sequence, read N- to C-terminus: MTITQVKIKKLENFSGSLPEYATEHSAGMDLIAANEQPITIKAGEIQLIPTGIAIALPDSFEAQIRPRSGLAVKHGITVANSPGTIDADYRGEIKVILINLGKEDFVIEKGMRIAQMIIAKYERILWEESSSLTETMRGSGGFGSTGV.

Residues 68 to 70 (RSG), Asn81, 85 to 87 (TID), and Lys95 each bind substrate.

It belongs to the dUTPase family. Mg(2+) is required as a cofactor.

It carries out the reaction dUTP + H2O = dUMP + diphosphate + H(+). Its pathway is pyrimidine metabolism; dUMP biosynthesis; dUMP from dCTP (dUTP route): step 2/2. Functionally, this enzyme is involved in nucleotide metabolism: it produces dUMP, the immediate precursor of thymidine nucleotides and it decreases the intracellular concentration of dUTP so that uracil cannot be incorporated into DNA. The sequence is that of Deoxyuridine 5'-triphosphate nucleotidohydrolase from Rickettsia felis (strain ATCC VR-1525 / URRWXCal2) (Rickettsia azadi).